Consider the following 172-residue polypeptide: Large ribosomal subunit protein bL9 (172 aa).

It belongs to the bacterial ribosomal protein bL9 family.

Its function is as follows. Binds to the 23S rRNA. This chain is Large ribosomal subunit protein bL9, found in Chlamydia abortus (strain DSM 27085 / S26/3) (Chlamydophila abortus).